The sequence spans 473 residues: UDP-glycosyltransferase 91D2 (473 aa).

The active-site Proton acceptor is histidine 26. Position 26 (histidine 26) interacts with an anthocyanidin. Aspartate 121 (charge relay) is an active-site residue. Positions 344, 346, 361, 366, and 369 each coordinate UDP-alpha-D-glucose. Residue glycine 384 coordinates an anthocyanidin. Positions 385 and 386 each coordinate UDP-alpha-D-glucose.

Belongs to the UDP-glycosyltransferase family.

The catalysed reaction is steviolmonoside + UDP-alpha-D-glucose = steviolbioside + UDP + H(+). It catalyses the reaction rubusoside + UDP-alpha-D-glucose = stevioside + UDP + H(+). The enzyme catalyses stevioside + UDP-alpha-D-glucose = rebaudioside E + UDP + H(+). It carries out the reaction rebaudioside A + UDP-alpha-D-glucose = rebaudioside D + UDP + H(+). Functionally, involved in the biosynthesis of steviol glycosides in leaves. Converts the mono-glycoside steviolmonoside to the bi-glycoside steviolbioside. Converts the bi-glycoside rubusoside to the tri-glycoside stevioside. Converts the tri-glycoside stevioside to the tetra-glycoside rebaudioside E. Converts the tetra-glycoside rebaudioside A to the penta-glycoside rebaudioside E. The polypeptide is UDP-glycosyltransferase 91D2 (Stevia rebaudiana (Stevia)).